The following is a 51-amino-acid chain: DNA-directed RNA polymerase subunit Rpo12 (51 aa).

Residues C14, C29, and C32 each coordinate Zn(2+).

This sequence belongs to the archaeal Rpo12/eukaryotic RPC10 RNA polymerase subunit family. Part of the RNA polymerase complex. Zn(2+) is required as a cofactor.

The protein localises to the cytoplasm. It carries out the reaction RNA(n) + a ribonucleoside 5'-triphosphate = RNA(n+1) + diphosphate. Functionally, DNA-dependent RNA polymerase (RNAP) catalyzes the transcription of DNA into RNA using the four ribonucleoside triphosphates as substrates. The polypeptide is DNA-directed RNA polymerase subunit Rpo12 (Methanopyrus kandleri (strain AV19 / DSM 6324 / JCM 9639 / NBRC 100938)).